Here is a 305-residue protein sequence, read N- to C-terminus: Ribosomal RNA small subunit methyltransferase H (305 aa).

S-adenosyl-L-methionine contacts are provided by residues 47–49 (GGH), Asp66, Phe93, Asp108, and Gln115.

The protein belongs to the methyltransferase superfamily. RsmH family.

It localises to the cytoplasm. It carries out the reaction cytidine(1402) in 16S rRNA + S-adenosyl-L-methionine = N(4)-methylcytidine(1402) in 16S rRNA + S-adenosyl-L-homocysteine + H(+). Functionally, specifically methylates the N4 position of cytidine in position 1402 (C1402) of 16S rRNA. The protein is Ribosomal RNA small subunit methyltransferase H of Prochlorococcus marinus (strain MIT 9211).